The following is a 125-amino-acid chain: MTKTKQEIYNKRPTSPHLTIYKPQISSTLSILHRMTGVALFFAVSILAWWFILSKFDSNYIKLANCCCIIKICLILTSFAWFYHLCNGIRHLFWDIGLGFSIKAVNLTGWSVVICSVLFTILLWV.

Topologically, residues 1–29 (MTKTKQEIYNKRPTSPHLTIYKPQISSTL) are cytoplasmic. Residues 30–55 (SILHRMTGVALFFAVSILAWWFILSK) traverse the membrane as a helical segment. The Periplasmic segment spans residues 56 to 68 (FDSNYIKLANCCC). A helical transmembrane segment spans residues 69–89 (IIKICLILTSFAWFYHLCNGI). Residue histidine 84 coordinates heme. Topologically, residues 90 to 104 (RHLFWDIGLGFSIKA) are cytoplasmic. A helical transmembrane segment spans residues 105 to 125 (VNLTGWSVVICSVLFTILLWV).

It belongs to the cytochrome b560 family. As to quaternary structure, part of an enzyme complex containing four subunits: a flavoprotein, an iron-sulfur protein, plus two membrane-anchoring proteins, SdhC and SdhD. The complex can form homotrimers. Heme serves as cofactor.

Its subcellular location is the cell inner membrane. It participates in carbohydrate metabolism; tricarboxylic acid cycle. Membrane-anchoring subunit of succinate dehydrogenase (SDH). This Rickettsia bellii (strain RML369-C) protein is Succinate dehydrogenase cytochrome b556 subunit (sdhC).